Here is a 544-residue protein sequence, read N- to C-terminus: Propane 2-monooxygenase, hydroxylase component large subunit (544 aa).

Residues glutamate 97, glutamate 127, histidine 130, glutamate 192, glutamate 226, and histidine 229 each coordinate Fe cation.

It belongs to the TmoA/XamoA family. The propane 2-monooxygenase multicomponent enzyme system is composed of an electron transfer component and a monooxygenase component interacting with the effector protein PrmD. The electron transfer component is composed of a reductase (PrmB), and the monooxygenase component is formed by a large subunit (PrmA) and a small subunit (PrmC). Probably requires the presence of the chaperonin-like protein PrmG to ensure a productive folding, resulting of a soluble PrmA, which leads to the active form of PrmABCD. Requires Fe(2+) as cofactor.

The catalysed reaction is propane + NADH + O2 + H(+) = propan-2-ol + NAD(+) + H2O. Component of the propane 2-monooxygenase multicomponent enzyme system which is involved in the degradation of propane via the O2-dependent hydroxylation of propane. Also able to catalyze the oxidation the water contaminant N-nitrosodimethylamine (NDMA). The polypeptide is Propane 2-monooxygenase, hydroxylase component large subunit (Rhodococcus jostii (strain RHA1)).